Here is a 315-residue protein sequence, read N- to C-terminus: Replication factor C small subunit (315 aa).

An ATP-binding site is contributed by 43–50 (GSPGVGKT).

It belongs to the activator 1 small subunits family. RfcS subfamily. Heteromultimer composed of small subunits (RfcS) and large subunits (RfcL).

Its function is as follows. Part of the RFC clamp loader complex which loads the PCNA sliding clamp onto DNA. The polypeptide is Replication factor C small subunit (Methanococcus maripaludis (strain C5 / ATCC BAA-1333)).